Reading from the N-terminus, the 72-residue chain is Small ribosomal subunit protein bS18 (72 aa).

This sequence belongs to the bacterial ribosomal protein bS18 family. As to quaternary structure, part of the 30S ribosomal subunit. Forms a tight heterodimer with protein bS6.

Its function is as follows. Binds as a heterodimer with protein bS6 to the central domain of the 16S rRNA, where it helps stabilize the platform of the 30S subunit. In Fusobacterium nucleatum subsp. nucleatum (strain ATCC 25586 / DSM 15643 / BCRC 10681 / CIP 101130 / JCM 8532 / KCTC 2640 / LMG 13131 / VPI 4355), this protein is Small ribosomal subunit protein bS18.